A 130-amino-acid chain; its full sequence is Sulfurtransferase TusD (130 aa).

The active-site Cysteine persulfide intermediate is the cysteine 78.

Belongs to the DsrE/TusD family. As to quaternary structure, heterohexamer, formed by a dimer of trimers. The hexameric TusBCD complex contains 2 copies each of TusB, TusC and TusD. The TusBCD complex interacts with TusE.

Its subcellular location is the cytoplasm. In terms of biological role, part of a sulfur-relay system required for 2-thiolation of 5-methylaminomethyl-2-thiouridine (mnm(5)s(2)U) at tRNA wobble positions. Accepts sulfur from TusA and transfers it in turn to TusE. The polypeptide is Sulfurtransferase TusD (Buchnera aphidicola subsp. Baizongia pistaciae (strain Bp)).